The sequence spans 212 residues: Uracil phosphoribosyltransferase (212 aa).

Residues Arg-78, Arg-103, and Asp-130 to Ser-138 contribute to the 5-phospho-alpha-D-ribose 1-diphosphate site. Uracil is bound by residues Ile-193 and Gly-198–Ala-200. 5-phospho-alpha-D-ribose 1-diphosphate is bound at residue Asp-199.

This sequence belongs to the UPRTase family. Mg(2+) is required as a cofactor.

The enzyme catalyses UMP + diphosphate = 5-phospho-alpha-D-ribose 1-diphosphate + uracil. It participates in pyrimidine metabolism; UMP biosynthesis via salvage pathway; UMP from uracil: step 1/1. Allosterically activated by GTP. Catalyzes the conversion of uracil and 5-phospho-alpha-D-ribose 1-diphosphate (PRPP) to UMP and diphosphate. The chain is Uracil phosphoribosyltransferase from Bordetella petrii (strain ATCC BAA-461 / DSM 12804 / CCUG 43448).